The chain runs to 567 residues: Septation ring formation regulator EzrA (567 aa).

Residues 1-2 are Extracellular-facing; it reads ME. The chain crosses the membrane as a helical span at residues 3 to 21; that stretch reads IAVIVLLLLGGVMIYNHVY. At 22 to 567 the chain is on the cytoplasmic side; that stretch reads RKKMYSEIDR…IFRDERSKEE (546 aa). 2 coiled-coil regions span residues 97–188 and 254–465; these read RYAK…LTAS and REIV…LEEK.

It belongs to the EzrA family.

The protein resides in the cell membrane. Its function is as follows. Negative regulator of FtsZ ring formation; modulates the frequency and position of FtsZ ring formation. Inhibits FtsZ ring formation at polar sites. Interacts either with FtsZ or with one of its binding partners to promote depolymerization. This is Septation ring formation regulator EzrA from Geobacillus sp. (strain WCH70).